Reading from the N-terminus, the 177-residue chain is ATP synthase subunit delta (177 aa).

Belongs to the ATPase delta chain family. As to quaternary structure, F-type ATPases have 2 components, F(1) - the catalytic core - and F(0) - the membrane proton channel. F(1) has five subunits: alpha(3), beta(3), gamma(1), delta(1), epsilon(1). F(0) has three main subunits: a(1), b(2) and c(10-14). The alpha and beta chains form an alternating ring which encloses part of the gamma chain. F(1) is attached to F(0) by a central stalk formed by the gamma and epsilon chains, while a peripheral stalk is formed by the delta and b chains.

The protein localises to the cell inner membrane. Functionally, f(1)F(0) ATP synthase produces ATP from ADP in the presence of a proton or sodium gradient. F-type ATPases consist of two structural domains, F(1) containing the extramembraneous catalytic core and F(0) containing the membrane proton channel, linked together by a central stalk and a peripheral stalk. During catalysis, ATP synthesis in the catalytic domain of F(1) is coupled via a rotary mechanism of the central stalk subunits to proton translocation. This protein is part of the stalk that links CF(0) to CF(1). It either transmits conformational changes from CF(0) to CF(1) or is implicated in proton conduction. The sequence is that of ATP synthase subunit delta from Klebsiella pneumoniae (strain 342).